The primary structure comprises 343 residues: KRR1 small subunit processome component homolog (343 aa).

The region spanning 125-193 is the KH domain; it reads DIIKIGNLVH…VRDIVVETMN (69 aa). A compositionally biased stretch (basic residues) spans 232–245; it reads NISKRKQPKVKKAK. The tract at residues 232-343 is disordered; it reads NISKRKQPKV…KLLKANKKKV (112 aa). A coiled-coil region spans residues 270–302; the sequence is FLNKEQKQAKRQQERSAKQADAAKRQDERRNKD. Residues 271-302 show a composition bias toward basic and acidic residues; sequence LNKEQKQAKRQQERSAKQADAAKRQDERRNKD. The span at 331 to 343 shows a compositional bias: basic residues; it reads LKAKLLKANKKKV.

The protein belongs to the KRR1 family. Monomer. Component of the ribosomal small subunit (SSU) processome.

Its subcellular location is the nucleus. The protein resides in the nucleolus. In terms of biological role, required for 40S ribosome biogenesis. Involved in nucleolar processing of pre-18S ribosomal RNA and ribosome assembly. Binds to RNA. Required for female germline development, cell viability during eye development and for survival of dividing cells and epithelial cells during early wing disk development. The protein is KRR1 small subunit processome component homolog of Drosophila ananassae (Fruit fly).